Reading from the N-terminus, the 792-residue chain is Glucocorticoid receptor (792 aa).

Positions 1–15 (MDSKESLAPPGRDEV) are enriched in basic and acidic residues. A disordered region spans residues 1-25 (MDSKESLAPPGRDEVPSSLLGRGRG). The interval 1 to 436 (MDSKESLAPP…STATGPPPKL (436 aa)) is modulating. Residue Arg-24 is modified to Omega-N-methylarginine. A Phosphoserine modification is found at Ser-46. Positions 67–98 (SKGSASNAQQQQQQQQQQQQQQQQQPQPDLSK) are disordered. The segment covering 75-94 (QQQQQQQQQQQQQQQQQPQP) has biased composition (low complexity). Phosphoserine is present on residues Ser-131, Ser-152, and Ser-159. Polar residues predominate over residues 148-162 (NRSTSRPENPKSSTP). A disordered region spans residues 148–201 (NRSTSRPENPKSSTPAAGCATPTEKEFPQTHSDPSSEQQNRKSQPGTNGGSVKL). The residue at position 168 (Thr-168) is a Phosphothreonine. Positions 176 to 193 (QTHSDPSSEQQNRKSQPG) are enriched in polar residues. Residues Ser-221, Ser-229, Ser-243, and Ser-284 each carry the phosphoserine modification. Glycyl lysine isopeptide (Lys-Gly) (interchain with G-Cter in SUMO); alternate cross-links involve residues Lys-294 and Lys-310. Glycyl lysine isopeptide (Lys-Gly) (interchain with G-Cter in SUMO2); alternate cross-links involve residues Lys-294 and Lys-310. Phosphoserine is present on residues Ser-324 and Ser-421. Positions 434-509 (PKLCLVCSDE…AGMNLEARKT (76 aa)) form a DNA-binding region, nuclear receptor. A Glycyl lysine isopeptide (Lys-Gly) (interchain with G-Cter in ubiquitin) cross-link involves residue Lys-435. NR C4-type zinc fingers lie at residues 437-457 (CLVCSDEASGCHYGVLTCGSC) and 473-497 (CAGRNDCIIDKIRRKNCPACRYRKC). N6-acetyllysine is present on residues Lys-496, Lys-508, Lys-510, and Lys-511. The tract at residues 501–792 (GMNLEARKTK…NIKKLLFHQK (292 aa)) is interaction with CLOCK. Positions 503-538 (NLEARKTKKKIKGIQQATAGVSQDTSENANKTIVPA) are hinge. Positions 539–773 (ALPQLTPTLV…FPEMLAEIIT (235 aa)) constitute an NR LBD domain. Residues 547–712 (LVSLLEVIEP…EIRMTYIKEL (166 aa)) form an interaction with CRY1 region. Residue Lys-718 forms a Glycyl lysine isopeptide (Lys-Gly) (interchain with G-Cter in SUMO) linkage.

The protein belongs to the nuclear hormone receptor family. NR3 subfamily. As to quaternary structure, heteromultimeric cytoplasmic complex with HSP90AA1, HSPA1A/HSPA1B, and FKBP5 or another immunophilin such as PPID, STIP1, or the immunophilin homolog PPP5C. Upon ligand binding FKBP5 dissociates from the complex and FKBP4 takes its place, thereby linking the complex to dynein and mediating transport to the nucleus, where the complex dissociates. Probably forms a complex composed of chaperones HSP90 and HSP70, co-chaperones CDC37, PPP5C, TSC1 and client protein TSC2, CDK4, AKT, RAF1 and NR3C1; this complex does not contain co-chaperones STIP1/HOP and PTGES3/p23. Directly interacts with UNC45A. Binds to DNA as a homodimer, and as heterodimer with NR3C2 or the retinoid X receptor. Binds STAT5A and STAT5B homodimers and heterodimers. Interacts with NRIP1, POU2F1, POU2F2 and TRIM28. Interacts with several coactivator complexes, including the SMARCA4 complex, CREBBP/EP300, TADA2L (Ada complex) and p160 coactivators such as NCOA2 and NCOA6. Interaction with BAG1 inhibits transactivation. Interacts with HEXIM1 and TGFB1I1. Interacts with NCOA1. Interacts with NCOA3, SMARCA4, SMARCC1, SMARCD1, and SMARCE1. Interacts with CLOCK, CRY1 and CRY2 in a ligand-dependent fashion. Interacts with CIART. Interacts with RWDD3. Interacts with UBE2I/UBC9 and this interaction is enhanced in the presence of RWDD3. Interacts with GRIP1. Interacts with NR4A3 (via nuclear receptor DNA-binding domain), represses transcription activity of NR4A3 on the POMC promoter Nur response element (NurRE). Directly interacts with PNRC2 to attract and form a complex with UPF1 and DCP1A; the interaction leads to rapid mRNA degradation. Interacts with GSK3B. Interacts with FNIP1 and FNIP2. Interacts (via C-terminus) with HNRNPU (via C-terminus). Interacts with MCM3AP. Interacts (via domain NR LBD) with HSP90AA1 and HSP90AB1. In the absence of hormonal ligand, interacts with TACC1. Interacts (via NR LBD domain) with ZNF764 (via KRAB domain); the interaction regulates transcription factor activity of NR3C1 by directing its actions toward certain biologic pathways. Post-translationally, acetylation by CLOCK reduces its binding to glucocorticoid response elements and its transcriptional activity. Increased proteasome-mediated degradation in response to glucocorticoids. In terms of processing, phosphorylated in the absence of hormone; becomes hyperphosphorylated in the presence of glucocorticoids. Phosphorylated in the absence of hormone; becomes hyperphosphorylated in the presence of glucocorticoid. The Ser-221, Ser-243 and Ser-421-phosphorylated forms are mainly cytoplasmic, and the Ser-229-phosphorylated form is nuclear. Phosphorylation at Ser-229 increases transcriptional activity. Phosphorylation at Ser-221, Ser-243 and Ser-421 decreases signaling capacity. Phosphorylation at Ser-421 may protect from glucocorticoid-induced apoptosis. Phosphorylation at Ser-221 and Ser-229 is not required in regulation of chromosome segregation. May be dephosphorylated by PPP5C, attenuates NR3C1 action. Post-translationally, sumoylation at Lys-294 and Lys-310 negatively regulates its transcriptional activity. Sumoylation at Lys-718 positively regulates its transcriptional activity in the presence of RWDD3. Sumoylation at Lys-294 and Lys-310 is dispensable whereas sumoylation at Lys-718 is critical for the stimulatory effect of RWDD3 on its transcriptional activity. Heat shock increases sumoylation in a RWDD3-dependent manner. Ubiquitinated. Ubiquitination by UBR5 leads to its degradation: UBR5 specifically recognizes and binds ligand-bound NR3C1 when it is not associated with coactivators (NCOAs). In presence of NCOAs, the UBR5-degron is not accessible, preventing its ubiquitination and degradation. As to expression, expressed in spleen, kidney and liver. Expressed in a circadian manner in the liver. Expressed at highest level in spleen with lesser amounts in kidney and liver.

Its subcellular location is the cytoplasm. The protein localises to the nucleus. It is found in the mitochondrion. The protein resides in the cytoskeleton. It localises to the spindle. Its subcellular location is the microtubule organizing center. The protein localises to the centrosome. It is found in the chromosome. The protein resides in the nucleoplasm. Its function is as follows. Receptor for glucocorticoids (GC). Has a dual mode of action: as a transcription factor that binds to glucocorticoid response elements (GRE), both for nuclear and mitochondrial DNA, and as a modulator of other transcription factors. Affects inflammatory responses, cellular proliferation and differentiation in target tissues. Involved in chromatin remodeling. Plays a role in rapid mRNA degradation by binding to the 5' UTR of target mRNAs and interacting with PNRC2 in a ligand-dependent manner which recruits the RNA helicase UPF1 and the mRNA-decapping enzyme DCP1A, leading to RNA decay. Could act as a coactivator for STAT5-dependent transcription upon growth hormone (GH) stimulation and could reveal an essential role of hepatic GR in the control of body growth. In terms of biological role, has transcriptional activation and repression activity. Mediates glucocorticoid-induced apoptosis. Promotes accurate chromosome segregation during mitosis. May act as a tumor suppressor. May play a negative role in adipogenesis through the regulation of lipolytic and antilipogenic gene expression. Acts as a dominant negative inhibitor of isoform 1. Has intrinsic transcriptional activity independent of isoform Alpha when both isoforms are coexpressed. Loses this transcription modulator function on its own. Has no hormone-binding activity. May play a role in controlling glucose metabolism by maintaining insulin sensitivity. Reduces hepatic gluconeogenesis through down-regulation of PEPCK in an isoform Alpha-dependent manner. Directly regulates STAT1 expression in isoform Alpha-independent manner. This chain is Glucocorticoid receptor (Nr3c1), found in Mus musculus (Mouse).